The following is a 240-amino-acid chain: MATAKELSASSNVDNTVVGPSILISGRLTGDEDLTVRGRVEGELTLSRTLIVEPSGVVKANVAVKNAIVSGVVVGNINATESVELTREGRMVGDIRAPRVIIVDGASFRGRVDMGDVEPGRLPAERPAVVRPTAVTRPTATPARPTIPAARPMPPPPPSRPTPPPPPARPSAPPAVTRPSAPITRPGLGGLGSKPLPPPPPTRVERAEPQAGQAGSAEPPTPVLVGAGAKKKVVVKKKTR.

The interacts with PadC stretch occupies residues 116-240 (DVEPGRLPAE…KKVVVKKKTR (125 aa)). A disordered region spans residues 117–240 (VEPGRLPAER…KKVVVKKKTR (124 aa)). Residues 126–150 (RPAVVRPTAVTRPTATPARPTIPAA) show a composition bias toward low complexity. A compositionally biased stretch (pro residues) spans 151 to 173 (RPMPPPPPSRPTPPPPPARPSAP). Over residues 229–240 (AKKKVVVKKKTR) the composition is skewed to basic residues.

It belongs to the bactofilin family. In terms of assembly, interacts with BacN and probably also BacO, the 3 proteins colocalize as an extended structure. Interacts with PadC.

The protein localises to the cytoplasm. The protein resides in the cytoskeleton. A non-essential component of the chromosome segregation machinery. Positions the ParA-ParB-parS chromosome segregation machinery within the cell; BacP seems to be the most important bactofilin in this process. Forms a heteropolymeric, subpolar scaffold in the cell; BacP probably forms the core, BacO contributes to position and integrity while BacN does not seem to contribute to assembly. The sequence is that of Bactofilin BacP from Myxococcus xanthus (strain DK1622).